The primary structure comprises 628 residues: Chaperone protein HtpG (628 aa).

Residues 1 to 337 (MSEKKYTFET…SADLPLNVSR (337 aa)) are a; substrate-binding. The b stretch occupies residues 338–554 (EILQHNKVID…DYGMSLHMQK (217 aa)). The segment at 555-628 (MMEEAGQSFM…FVKLVNKYIR (74 aa)) is c.

Belongs to the heat shock protein 90 family. As to quaternary structure, homodimer.

It is found in the cytoplasm. Functionally, molecular chaperone. Has ATPase activity. The polypeptide is Chaperone protein HtpG (Francisella tularensis subsp. holarctica (strain FTNF002-00 / FTA)).